The chain runs to 408 residues: NADH-quinone oxidoreductase subunit D (408 aa).

This sequence belongs to the complex I 49 kDa subunit family. As to quaternary structure, NDH-1 is composed of 14 different subunits. Subunits NuoB, C, D, E, F, and G constitute the peripheral sector of the complex.

Its subcellular location is the cell inner membrane. It carries out the reaction a quinone + NADH + 5 H(+)(in) = a quinol + NAD(+) + 4 H(+)(out). NDH-1 shuttles electrons from NADH, via FMN and iron-sulfur (Fe-S) centers, to quinones in the respiratory chain. The immediate electron acceptor for the enzyme in this species is believed to be ubiquinone. Couples the redox reaction to proton translocation (for every two electrons transferred, four hydrogen ions are translocated across the cytoplasmic membrane), and thus conserves the redox energy in a proton gradient. The chain is NADH-quinone oxidoreductase subunit D from Campylobacter jejuni subsp. jejuni serotype O:23/36 (strain 81-176).